The sequence spans 598 residues: Aluminum-activated malate transporter 9 (598 aa).

The next 6 membrane-spanning stretches (helical) occupy residues 88–108 (IVFS…IFYQ), 117–137 (YSVW…GATL), 144–164 (ALGT…STLF), 170–190 (IFCT…KLYP), 194–214 (AYEY…ISGF), and 227–247 (FLLI…IYPI).

Belongs to the aromatic acid exporter (TC 2.A.85) family. As to expression, expressed in hypocotyls, leaves, roots, flowers, sepals and stamina. In leaves, expressed almost exclusively in mesophyll cells.

The protein localises to the vacuole membrane. Slow activation by external aluminum. Its function is as follows. Vacuolar malate channel. Has a higher selectivity for malate than for fumarate. Also exhibits a weak chloride conductance. This chain is Aluminum-activated malate transporter 9 (ALMT9), found in Arabidopsis thaliana (Mouse-ear cress).